The sequence spans 140 residues: Large ribosomal subunit protein uL14 (140 aa).

It belongs to the universal ribosomal protein uL14 family. Component of the large ribosomal subunit.

It localises to the cytoplasm. Component of the large ribosomal subunit. The ribosome is a large ribonucleoprotein complex responsible for the synthesis of proteins in the cell. This is Large ribosomal subunit protein uL14 (rpl23) from Ictalurus punctatus (Channel catfish).